Reading from the N-terminus, the 574-residue chain is MYND-type zinc finger protein C31F10.10c (574 aa).

2 disordered regions span residues 207 to 253 (DSGD…QDPR) and 283 to 307 (MTTPSSPSYSRQTGPASETINDEID). Composition is skewed to polar residues over residues 243-253 (IYSNDSFQDPR) and 283-301 (MTTPSSPSYSRQTGPASET). The MYND-type; degenerate zinc finger occupies 482–523 (NLLCNKWEEHSRQFAKCRRCRRTKYCSKECQHQAWPGHSRWC). The Zn(2+) site is built by Cys498, Cys501, His519, and Cys523. Residues 534–574 (KRESSKINSVTESESTASPAASVIPVGTESVTSSTQSDSRL) form a disordered region. A compositionally biased stretch (low complexity) spans 542–556 (SVTESESTASPAASV). Polar residues predominate over residues 562–574 (ESVTSSTQSDSRL).

Belongs to the MUB1/samB family.

It localises to the nucleus. The protein resides in the cytoplasm. Its subcellular location is the cytoskeleton. It is found in the microtubule organizing center. The protein localises to the spindle pole body. In Schizosaccharomyces pombe (strain 972 / ATCC 24843) (Fission yeast), this protein is MYND-type zinc finger protein C31F10.10c.